The sequence spans 1033 residues: Potassium-transporting ATPase alpha chain 2 (1033 aa).

The Cytoplasmic segment spans residues 1-96 (MRRKTLEIYS…NALSPPKQTP (96 aa)). The helical transmembrane segment at 97–117 (EIIKFLKQMIGGFSILLWVGA) threads the bilayer. Over 118 to 140 (ILCWIAYGIQYASNQSGSLDNVY) the chain is Lumenal. A helical transmembrane segment spans residues 141–161 (LGVVLALVVILTGIFAYYQEA). The Cytoplasmic segment spans residues 162 to 297 (KSTNIMSSFS…NEKTPIATEI (136 aa)). Residues 298–317 (EHFVHIVAGVAVSIGILFFI) form a helical membrane-spanning segment. Over 318-329 (IAVSLKYRVLDS) the chain is Lumenal. Residues 330–347 (IIFLIGIIVANVPEGLLA) form a helical membrane-spanning segment. At 348–781 (TVTVTLSLTA…EEGRLIFDNL (434 aa)) the chain is on the cytoplasmic side. Asp385 acts as the 4-aspartylphosphate intermediate in catalysis. Mg(2+) is bound by residues Asp726 and Asp730. The chain crosses the membrane as a helical span at residues 782-801 (KKTIAYTLTKNIAELCPFLV). Residues 802 to 811 (YIIVGLPLPI) lie on the Lumenal side of the membrane. The chain crosses the membrane as a helical span at residues 812–832 (GTITILFIDLGTDIIPSIALA). Topologically, residues 833 to 852 (YEKVESDIMNRKPRHKKKDR) are cytoplasmic. The chain crosses the membrane as a helical span at residues 853 to 875 (LVNHQLAIYSYLHIGLMQALGAF). The Lumenal portion of the chain corresponds to 876–927 (LVYFTVYAQQGFWPTSLIQLRVKWEQDYVNDLEDSYGQQWTRYQRKYLEWTG). Residues 928–947 (YTAFFVGIMVQQIADLIIRK) traverse the membrane as a helical segment. Topologically, residues 948-961 (TRRNSIFQQGLFRN) are cytoplasmic. Ser952 is subject to Phosphoserine; by PKA. Residues 962 to 980 (KVIWVGITSQIIVALILSC) traverse the membrane as a helical segment. At 981-995 (GLGSITALNFTMLRV) the chain is on the lumenal side. A helical transmembrane segment spans residues 996 to 1016 (QYWFVAVPHAILIWVYDEVRK). Over 1017–1033 (LFLRLYPGSWWDKNMYY) the chain is Cytoplasmic.

It belongs to the cation transport ATPase (P-type) (TC 3.A.3) family. Type IIC subfamily. In terms of assembly, composed of two subunits: alpha (catalytic) and beta. In terms of tissue distribution, found in skin, kidney and distal colon.

It localises to the membrane. It catalyses the reaction K(+)(out) + ATP + H2O + H(+)(in) = K(+)(in) + ADP + phosphate + 2 H(+)(out). Functionally, catalyzes the hydrolysis of ATP coupled with the exchange of H(+) and K(+) ions across the plasma membrane. Responsible for potassium absorption in various tissues. The sequence is that of Potassium-transporting ATPase alpha chain 2 (ATP12A) from Cavia porcellus (Guinea pig).